Consider the following 255-residue polypeptide: MRILLTNDDGIHAEGLAVLERIARKLSDDVWVVAPETDQSGLAHSLTLSEPLRLRQIDARHFALRGTPTDCVIMGVRHVLPGAPNLVLSGVNSGANMADDVTYSGTVAGAMEGTLLGVRAIALSQEYEYAGDRRIVPWETAEAHAPELIGRLMEAGWPEGVLLNLNFPNCAPEEVKGVRVTAQGKLSHDARLDERRDGRGFPYFWLHFGRGKAPVADDSDIAAIRSGCISVTPLHLDLTAHKVRAELGAALGVEA.

A divalent metal cation contacts are provided by Asp8, Asp9, Ser40, and Asn92.

This sequence belongs to the SurE nucleotidase family. It depends on a divalent metal cation as a cofactor.

The protein resides in the cytoplasm. The enzyme catalyses a ribonucleoside 5'-phosphate + H2O = a ribonucleoside + phosphate. Its function is as follows. Nucleotidase that shows phosphatase activity on nucleoside 5'-monophosphates. This Brucella suis (strain ATCC 23445 / NCTC 10510) protein is 5'-nucleotidase SurE.